Reading from the N-terminus, the 500-residue chain is Pentatricopeptide repeat-containing protein At1g06580 (500 aa).

PPR repeat units follow at residues 78-112 (SIVD…GISH), 113-147 (DLYS…GFEP), 148-182 (SIVT…GYEP), 183-217 (NVVI…GIRP), 218-252 (DVVT…GISP), 253-287 (DVIT…SVNP), 288-322 (NIVT…GFFP), 323-357 (NAVT…GVDG), 358-392 (DTFT…GVHP), 393-427 (DMYT…KTVV), 428-462 (GIIT…GVSP), and 463-498 (DVIT…GLMP).

The protein belongs to the PPR family. P subfamily.

The sequence is that of Pentatricopeptide repeat-containing protein At1g06580 from Arabidopsis thaliana (Mouse-ear cress).